The primary structure comprises 303 residues: uncharacterized protein (303 aa).

This is an uncharacterized protein from Leptospira interrogans.